Here is a 433-residue protein sequence, read N- to C-terminus: G2/mitotic-specific cyclin-B1 (433 aa).

Residues 19 to 47 (INMAGAKRVPTAPAATSKPGLRPRTALGD) form a disordered region. Lys73 carries the post-translational modification N6-acetyllysine. The tract at residues 93 to 116 (PVSEPVPEPEPEPEPEPVKEEKLS) is disordered. Ser126 carries the post-translational modification Phosphoserine; by CDK1. Residue Ser128 is modified to Phosphoserine. Residue Ser133 is modified to Phosphoserine; by PLK1. The residue at position 147 (Ser147) is a Phosphoserine. Interaction with CDK2 regions lie at residues 169-177 (EYVKDIYAY) and 258-261 (YEEM). A Phosphothreonine modification is found at Thr321.

It belongs to the cyclin family. Cyclin AB subfamily. As to quaternary structure, interacts with the CDC2 protein kinase to form a serine/threonine kinase holoenzyme complex also known as maturation promoting factor (MPF). The cyclin subunit imparts substrate specificity to the complex. Binds HEI10. Interacts with catalytically active RALBP1 and CDC2 during mitosis to form an endocytotic complex during interphase. Interacts with CCNF; interaction is required for nuclear localization. Interacts with CDK5RAP3. Interacts with RFPL4A and UBE2A. Interacts with INCA1. Post-translationally, ubiquitinated by the SCF(NIPA) complex during interphase, leading to its destruction. Deubiquitinated by USP22 during G2/M phase. Phosphorylated by PLK1 at Ser-133 on centrosomes during prophase: phosphorylation by PLK1 does not cause nuclear import. Phosphorylation at Ser-147 was also reported to be mediated by PLK1 but Ser-133 seems to be the primary phosphorylation site.

The protein localises to the cytoplasm. Its subcellular location is the nucleus. It is found in the cytoskeleton. The protein resides in the microtubule organizing center. It localises to the centrosome. Essential for the control of the cell cycle at the G2/M (mitosis) transition. In Homo sapiens (Human), this protein is G2/mitotic-specific cyclin-B1 (CCNB1).